Consider the following 244-residue polypeptide: L-xylulose reductase (244 aa).

Residue Met-1 is modified to N-acetylmethionine. Position 11 to 39 (11 to 39 (LVTGAGKGIGRSTVLALKAAGAQVVAVSR)) interacts with NADP(+). An Omega-N-methylarginine modification is found at Arg-21. Residue Ser-136 participates in substrate binding. Tyr-149 functions as the Proton acceptor in the catalytic mechanism. The active site involves Lys-153.

The protein belongs to the short-chain dehydrogenases/reductases (SDR) family. As to quaternary structure, homotetramer. Highly expressed in kidney and liver. Expressed in epididymis. Expressed at intermediate level in lung. Weakly expressed in brain, heart, spleen and testis.

Its subcellular location is the membrane. The catalysed reaction is xylitol + NADP(+) = L-xylulose + NADPH + H(+). Functionally, catalyzes the NADPH-dependent reduction of several pentoses, tetroses, trioses, alpha-dicarbonyl compounds and L-xylulose. Participates in the uronate cycle of glucose metabolism. May play a role in the water absorption and cellular osmoregulation in the proximal renal tubules by producing xylitol, an osmolyte, thereby preventing osmolytic stress from occurring in the renal tubules. The polypeptide is L-xylulose reductase (DCXR) (Cavia porcellus (Guinea pig)).